The chain runs to 466 residues: Asparagine--tRNA ligase (466 aa).

The protein belongs to the class-II aminoacyl-tRNA synthetase family. As to quaternary structure, homodimer.

The protein localises to the cytoplasm. It catalyses the reaction tRNA(Asn) + L-asparagine + ATP = L-asparaginyl-tRNA(Asn) + AMP + diphosphate + H(+). The sequence is that of Asparagine--tRNA ligase from Shewanella putrefaciens (strain CN-32 / ATCC BAA-453).